Here is a 236-residue protein sequence, read N- to C-terminus: UPF0257 lipoprotein YnfC (236 aa).

A signal peptide spans 1–16 (MKYKLLPCLLAIFLTG). Cys-17 carries N-palmitoyl cysteine lipidation. Cys-17 carries the S-diacylglycerol cysteine lipid modification.

Belongs to the UPF0257 family.

Its subcellular location is the cell membrane. In Shigella flexneri, this protein is UPF0257 lipoprotein YnfC (ynfC).